The sequence spans 498 residues: MGKVAVAFAAVAVVAACSVAAVMVGRRMKSRRKWRTVVEILKELEDDCDTPVGRLRQVVDAMAVEMHAGLASEGGSKLKMLLTFVDDLPTGREKGTYYALHLGGTYFRILRVLLGDQRSYLDVQDVERHPIPSHLMNSTSEVLFNFLAFSLERFIEKEENGSDSQGVRRELAFTFSFPVKHTSISSGVLIKWTKGFEISEMVGQDIAECLQGALNRRGLDMHVAALVNDTVGALSLGYYHDPDTVVAVVFGTGSNACYLERTDAIIKCQGLLTTSGSMVVNMEWGNFWSSHLPRTSYDIDLDAESSNANDMGFEKMISGMYLGDIVRRVILRMSEDSDIFGPISPVLSEPYVLRTNSVSAIHEDDTPELQEVARILKDIGVSDVPLKVRKLVVKICDVVTRRAGRLAAAGIAGILKKIGRDGSGGITSGRSRSEIQMQKRTVVAVEGGLYMNYTMFREYMEEALVEILGEEVSQYVVVKAMEDGSSIGSALLVASLQS.

Residues 4-24 (VAVAFAAVAVVAACSVAAVMV) form a helical membrane-spanning segment. Residues 35 to 494 (RTVVEILKEL…SSIGSALLVA (460 aa)) form the Hexokinase domain. The hexokinase small subdomain stretch occupies residues 90–227 (TGREKGTYYA…GLDMHVAALV (138 aa)). ADP-binding residues include Gly104 and Thr105. Residues Thr193, Lys194, Asn228, and Asp229 each coordinate D-glucose. The hexokinase large subdomain stretch occupies residues 228–483 (NDTVGALSLG…QYVVVKAMED (256 aa)). Thr252 contacts ADP. D-glucose-binding residues include Asn255, Glu283, and Glu314. Gly448 contacts ADP.

This sequence belongs to the hexokinase family. As to expression, expressed in roots, emerging lateral roots, vascular tissues of cotyledons, roots and leaves, root and shoot meristems, anther filaments and funiculi of mature seeds.

It localises to the mitochondrion outer membrane. It catalyses the reaction a D-hexose + ATP = a D-hexose 6-phosphate + ADP + H(+). It carries out the reaction D-fructose + ATP = D-fructose 6-phosphate + ADP + H(+). The catalysed reaction is D-glucose + ATP = D-glucose 6-phosphate + ADP + H(+). It functions in the pathway carbohydrate metabolism; hexose metabolism. Its pathway is carbohydrate degradation; glycolysis; D-glyceraldehyde 3-phosphate and glycerone phosphate from D-glucose: step 1/4. Functionally, fructose and glucose phosphorylating enzyme. May be involved in the phosphorylation of glucose during the export from mitochondrion to cytosol. Plays a role in plant growth and development, perhaps by mediating cross-talk between glucose and hormone response pathways. Involved in root hair cell development by mediating certain aspects of cross talk between glucose and ethylene response pathways. This Arabidopsis thaliana (Mouse-ear cress) protein is Hexokinase-3.